We begin with the raw amino-acid sequence, 186 residues long: MAAVDPSVSGVSGRYATALFELAREDKSIDAVKADLDKFDAMLAESPELVRLVRSPVFSADTQSKALAAVLSKAGIGGTTANFLKVLAANRRLFAVADVIRAFRALVAKFKGEATAEVTVAEKLNDKNLDALKAALKSVTGKDITLNVKVDPSIIGGLVVKLGSRMVDTSLRTKLNSIKHAMKEAG.

It belongs to the ATPase delta chain family. In terms of assembly, F-type ATPases have 2 components, F(1) - the catalytic core - and F(0) - the membrane proton channel. F(1) has five subunits: alpha(3), beta(3), gamma(1), delta(1), epsilon(1). F(0) has three main subunits: a(1), b(2) and c(10-14). The alpha and beta chains form an alternating ring which encloses part of the gamma chain. F(1) is attached to F(0) by a central stalk formed by the gamma and epsilon chains, while a peripheral stalk is formed by the delta and b chains.

It localises to the cell inner membrane. Functionally, f(1)F(0) ATP synthase produces ATP from ADP in the presence of a proton or sodium gradient. F-type ATPases consist of two structural domains, F(1) containing the extramembraneous catalytic core and F(0) containing the membrane proton channel, linked together by a central stalk and a peripheral stalk. During catalysis, ATP synthesis in the catalytic domain of F(1) is coupled via a rotary mechanism of the central stalk subunits to proton translocation. In terms of biological role, this protein is part of the stalk that links CF(0) to CF(1). It either transmits conformational changes from CF(0) to CF(1) or is implicated in proton conduction. This is ATP synthase subunit delta from Nitrobacter winogradskyi (strain ATCC 25391 / DSM 10237 / CIP 104748 / NCIMB 11846 / Nb-255).